We begin with the raw amino-acid sequence, 569 residues long: Glutamyl-tRNA reductase (569 aa).

Substrate-binding positions include 49–52, Ser-109, 114–116, and Gln-120; these read TCNR and EGQ. Cys-50 acts as the Nucleophile in catalysis. NADP(+) is bound at residue 192 to 197; the sequence is GAGSMS. The tract at residues 284–397 is insert; the sequence is PVAVREETPA…VEAPRPAPAL (114 aa). The disordered stretch occupies residues 546-569; it reads AAVSRADDRDTSDSTENAKNRGRE. Residues 550-569 show a composition bias toward basic and acidic residues; sequence RADDRDTSDSTENAKNRGRE.

The protein belongs to the glutamyl-tRNA reductase family. In terms of assembly, homodimer.

The enzyme catalyses (S)-4-amino-5-oxopentanoate + tRNA(Glu) + NADP(+) = L-glutamyl-tRNA(Glu) + NADPH + H(+). Its pathway is porphyrin-containing compound metabolism; protoporphyrin-IX biosynthesis; 5-aminolevulinate from L-glutamyl-tRNA(Glu): step 1/2. In terms of biological role, catalyzes the NADPH-dependent reduction of glutamyl-tRNA(Glu) to glutamate 1-semialdehyde (GSA). The chain is Glutamyl-tRNA reductase from Streptomyces avermitilis (strain ATCC 31267 / DSM 46492 / JCM 5070 / NBRC 14893 / NCIMB 12804 / NRRL 8165 / MA-4680).